A 271-amino-acid polypeptide reads, in one-letter code: Acetyl-coenzyme A carboxylase carboxyl transferase subunit alpha (271 aa).

Positions 1 to 247 (MSRELIRTAD…KKTILEALGE (247 aa)) constitute a CoA carboxyltransferase C-terminal domain.

The protein belongs to the AccA family. In terms of assembly, acetyl-CoA carboxylase is a heterohexamer composed of biotin carboxyl carrier protein (AccB), biotin carboxylase (AccC) and two subunits each of ACCase subunit alpha (AccA) and ACCase subunit beta (AccD).

It localises to the cytoplasm. The catalysed reaction is N(6)-carboxybiotinyl-L-lysyl-[protein] + acetyl-CoA = N(6)-biotinyl-L-lysyl-[protein] + malonyl-CoA. The protein operates within lipid metabolism; malonyl-CoA biosynthesis; malonyl-CoA from acetyl-CoA: step 1/1. In terms of biological role, component of the acetyl coenzyme A carboxylase (ACC) complex. First, biotin carboxylase catalyzes the carboxylation of biotin on its carrier protein (BCCP) and then the CO(2) group is transferred by the carboxyltransferase to acetyl-CoA to form malonyl-CoA. This chain is Acetyl-coenzyme A carboxylase carboxyl transferase subunit alpha, found in Clostridium perfringens (strain 13 / Type A).